Here is a 122-residue protein sequence, read N- to C-terminus: Small ribosomal subunit protein uS13 (122 aa).

Residues glycine 95–lysine 122 form a disordered region.

The protein belongs to the universal ribosomal protein uS13 family. In terms of assembly, part of the 30S ribosomal subunit. Forms a loose heterodimer with protein S19. Forms two bridges to the 50S subunit in the 70S ribosome.

Its function is as follows. Located at the top of the head of the 30S subunit, it contacts several helices of the 16S rRNA. In the 70S ribosome it contacts the 23S rRNA (bridge B1a) and protein L5 of the 50S subunit (bridge B1b), connecting the 2 subunits; these bridges are implicated in subunit movement. Contacts the tRNAs in the A and P-sites. This is Small ribosomal subunit protein uS13 from Caulobacter sp. (strain K31).